We begin with the raw amino-acid sequence, 622 residues long: Dehydrogenase xptC (622 aa).

The N-terminal stretch at 1 to 18 (MAKLSVILLFRSLLLCGA) is a signal peptide. Residues 47 to 48 (VS), 68 to 69 (EA), and 123 to 126 (NAMI) each bind FAD. Residues Asn-160, Asn-173, Asn-357, Asn-364, and Asn-480 are each glycosylated (N-linked (GlcNAc...) asparagine). 598-599 (PM) serves as a coordination point for FAD.

This sequence belongs to the GMC oxidoreductase family. In terms of assembly, homodimer. It depends on FAD as a cofactor.

It participates in secondary metabolite biosynthesis. Dehydrogenase involved in the conversion of monodictyphenone to the prenyl xanthones such as emericellin, shamixanthone and epishamixanthone. Monodictyphenone is first converted to variecoxanthone A via a paeciloxanthone intermediate by the consecutive actions of the FAD-dependent monooxygenase mdpD and the xanthone prenyltransferase xptB. XptB catalyzes regular O-prenylation at the hydroxy group of C-7 of the xanthone ring. Variecoxanthone A is further prenylated to emericellin by xptA before being reduced to shamixanthone and epishamixanthone by the dehydrogenase xptC. The protein is Dehydrogenase xptC of Emericella nidulans (strain FGSC A4 / ATCC 38163 / CBS 112.46 / NRRL 194 / M139) (Aspergillus nidulans).